The chain runs to 476 residues: Growth/differentiation factor 10 (476 aa).

The first 29 residues, 1 to 29, serve as a signal peptide directing secretion; that stretch reads MAPGPARISLGSQLLPMVPLLLLLRGAGC. Positions 30–366 are excised as a propeptide; it reads GHRGPSWSSL…EKTMQKARRR (337 aa). The interval 39–63 is disordered; sequence LPSAAAGLQGDRDSQQSPGDAAAAL. 3 N-linked (GlcNAc...) asparagine glycosylation sites follow: asparagine 114, asparagine 152, and asparagine 277. The disordered stretch occupies residues 268–301; the sequence is GDFEPGAAPNSSADPRVRRAAQVSKPLQDNELPG. Intrachain disulfides connect cysteine 374–cysteine 441, cysteine 403–cysteine 473, and cysteine 407–cysteine 475. An N-linked (GlcNAc...) asparagine glycan is attached at asparagine 467.

Belongs to the TGF-beta family. Homodimer or heterodimer. Can form a non-covalent complex of the mature region and the pro-region. As to expression, highly expressed in epididymal adipose tissue, brain, bone and aorta and to a lesser extent in liver and spleen. Expressed at higher levels in preadipocytes than in mature adipocytes. Strongly expressed in glial cells of the cerebellum.

It is found in the secreted. Functionally, growth factor involved in osteogenesis and adipogenesis. Plays an inhibitory role in the process of osteoblast differentiation via SMAD2/3 pathway. Plays an inhibitory role in the process of adipogenesis. The polypeptide is Growth/differentiation factor 10 (Mus musculus (Mouse)).